Reading from the N-terminus, the 206-residue chain is uncharacterized protein (206 aa).

Residues 32–201 (VYIDAGHGGE…AADAIVNGID (170 aa)) form the MurNAc-LAA domain.

This sequence belongs to the N-acetylmuramoyl-L-alanine amidase 3 family.

This is an uncharacterized protein from Bacillus subtilis (strain 168).